The chain runs to 359 residues: MNKGIIDQLTRLSMRLGELDKLLSTEKITADLDNYRKLSRERAEIEPVTELYRTYQQVEQDLATAREMSSDPQFRDFAEAEIEADRRKLTNIETEILRQLLPKDPNDERNIFLEIRAGTGGDESALFAGDLFRMYSRYAEREGWQVEVVSQNPSEVGGYKEIIVRIIGHGAYSRLKFESGGHRVQRVPATETQGRVHTSTCTVAVLPEADEIADITLNPADLRIDTFRASGAGGQHINKTDSAVRITHLPTGIVAECQEGRSQHKNKAQAMSVLIARILDKQVRAQQAEQAATRKSLVGSGERSERIRTYNFPQGRITDHRINLTLYKIEQIIDGELDELCSALAAEHQAAQLAAMTEK.

Glutamine 235 carries the post-translational modification N5-methylglutamine.

This sequence belongs to the prokaryotic/mitochondrial release factor family. In terms of processing, methylated by PrmC. Methylation increases the termination efficiency of RF1.

Its subcellular location is the cytoplasm. In terms of biological role, peptide chain release factor 1 directs the termination of translation in response to the peptide chain termination codons UAG and UAA. The sequence is that of Peptide chain release factor 1 from Nitrosomonas europaea (strain ATCC 19718 / CIP 103999 / KCTC 2705 / NBRC 14298).